A 1079-amino-acid chain; its full sequence is Carbamoyl phosphate synthase large chain (1079 aa).

Residues 2–403 are carboxyphosphate synthetic domain; that stretch reads PKSTDIKSIL…SIQKAIRGLE (402 aa). ATP-binding residues include Arg-129, Arg-169, Gly-175, Gly-176, Glu-208, Leu-210, Glu-215, Gly-241, Ile-242, His-243, Gln-285, and Glu-299. An ATP-grasp 1 domain is found at 133-328; that stretch reads EHSMKKLNLE…IAKIAAKLAI (196 aa). Positions 285, 299, and 301 each coordinate Mg(2+). Residues Gln-285, Glu-299, and Asn-301 each contribute to the Mn(2+) site. Residues 404 to 553 form an oligomerization domain region; that stretch reads VGASGFDSKI…YSTWEDECES (150 aa). The carbamoyl phosphate synthetic domain stretch occupies residues 554–936; it reads HPSKNNKKII…AFSKSMLGAH (383 aa). The ATP-grasp 2 domain maps to 679–870; it reads QKTVNKLRLQ…LAKISVRVMC (192 aa). Residues Arg-715, Gln-754, Leu-756, Glu-761, Gly-786, Val-787, His-788, Ser-789, Gln-829, and Glu-841 each contribute to the ATP site. Mg(2+)-binding residues include Gln-829, Glu-841, and Asn-843. 3 residues coordinate Mn(2+): Gln-829, Glu-841, and Asn-843. The MGS-like domain maps to 937-1079; that stretch reads TNMKKSGRVL…KKIQLFYTKK (143 aa). The allosteric domain stretch occupies residues 937–1079; sequence TNMKKSGRVL…KKIQLFYTKK (143 aa).

Belongs to the CarB family. Composed of two chains; the small (or glutamine) chain promotes the hydrolysis of glutamine to ammonia, which is used by the large (or ammonia) chain to synthesize carbamoyl phosphate. Tetramer of heterodimers (alpha,beta)4. Requires Mg(2+) as cofactor. Mn(2+) is required as a cofactor.

The catalysed reaction is hydrogencarbonate + L-glutamine + 2 ATP + H2O = carbamoyl phosphate + L-glutamate + 2 ADP + phosphate + 2 H(+). The enzyme catalyses hydrogencarbonate + NH4(+) + 2 ATP = carbamoyl phosphate + 2 ADP + phosphate + 2 H(+). It participates in amino-acid biosynthesis; L-arginine biosynthesis; carbamoyl phosphate from bicarbonate: step 1/1. The protein operates within pyrimidine metabolism; UMP biosynthesis via de novo pathway; (S)-dihydroorotate from bicarbonate: step 1/3. In terms of biological role, large subunit of the glutamine-dependent carbamoyl phosphate synthetase (CPSase). CPSase catalyzes the formation of carbamoyl phosphate from the ammonia moiety of glutamine, carbonate, and phosphate donated by ATP, constituting the first step of 2 biosynthetic pathways, one leading to arginine and/or urea and the other to pyrimidine nucleotides. The large subunit (synthetase) binds the substrates ammonia (free or transferred from glutamine from the small subunit), hydrogencarbonate and ATP and carries out an ATP-coupled ligase reaction, activating hydrogencarbonate by forming carboxy phosphate which reacts with ammonia to form carbamoyl phosphate. This Buchnera aphidicola subsp. Acyrthosiphon pisum (strain APS) (Acyrthosiphon pisum symbiotic bacterium) protein is Carbamoyl phosphate synthase large chain.